We begin with the raw amino-acid sequence, 303 residues long: RELT-like protein 2 (303 aa).

The helical transmembrane segment at 15 to 35 (LYMLFLLVLVFFLMGLVGFMI) threads the bilayer. 2 disordered regions span residues 46 to 67 (CRTS…DDDM) and 132 to 303 (CLHC…AGSM). A Phosphoserine modification is found at Ser-52. 2 stretches are compositionally biased toward basic and acidic residues: residues 148 to 158 (RSKEGKSRPRT) and 172 to 188 (THIE…DGSP). Residues 194–212 (GSGGGQDPGGGQGSGGGQP) are compositionally biased toward gly residues. Positions 278 to 296 (QEANGQPSKPDTSDHQVSL) are enriched in polar residues.

This sequence belongs to the RELT family. As to quaternary structure, interacts with RELT, RELL1 and OXSR1. Interacts with PLSCR1. Interacts with TRAF2. In terms of processing, phosphorylated in vitro by OXSR1. As to expression, primarily expressed in spleen, thymus, testis, peripheral blood leukocytes, brain and placenta. Not detected in prostate, ovary, small intestine, colon, heart, lung, liver, skeletal muscle, kidney and pancreas.

It is found in the cell membrane. Functionally, induces activation of MAPK14/p38 cascade, when overexpressed. Induces apoptosis, when overexpressed. The chain is RELT-like protein 2 (RELL2) from Homo sapiens (Human).